Here is a 210-residue protein sequence, read N- to C-terminus: Thymidylate kinase (210 aa).

Asp17 contacts dGMP. Residue Asp17 coordinates dTMP. ATP contacts are provided by Arg18, Ser19, Gly20, Lys21, Ser22, and Thr23. Residues Arg47, Phe74, Arg78, Arg99, and Tyr107 each coordinate dTMP. Phe74, Arg78, Arg99, Tyr107, Ser108, and Tyr153 together coordinate dGMP. Positions 143–155 (QNRSDYGEEIYEK) are LID. Arg182 contributes to the ATP binding site.

Belongs to the thymidylate kinase family. In terms of assembly, homodimer. Binds two dTMP molecules per dimer. Binds only one dTGP molecule per dimer.

The catalysed reaction is dTMP + ATP = dTDP + ADP. It carries out the reaction dGMP + ATP = dGDP + ADP. Its pathway is pyrimidine metabolism; dTTP biosynthesis. Its activity is regulated as follows. Inhibited by deoxyguanosine (dG), deoxythymidine (dT) and azidothymidine (AZT). Catalyzes the phosphorylation of thymidine monophosphate (dTMP) to thymidine diphosphate (dTDP), the immediate precursor for the DNA building block dTTP. Can also phosphorylate dGMP and to a lesser extent GMP, dUMP and dIMP. Can use either ATP or dATP as phosphate donors in presence of Mg(2+). The sequence is that of Thymidylate kinase from Plasmodium falciparum (isolate 3D7).